A 255-amino-acid chain; its full sequence is Postacrosomal sheath WW domain-binding protein (255 aa).

Residues L15–Q87 form the GRAM domain. 7 tandem repeats follow at residues Y139 to G145, Y146 to G152, Y153 to G159, Y160 to G166, Y167 to G173, Y174 to G180, and Y202 to G208. Residues Y139–G208 form a 6 X 7 AA tandem repeat of Y-G-X-P-P-X-G region. Residues P171–Y174 carry the PPxY motif motif. 2 disordered regions span residues G180–P199 and A204–S255.

Functionally, may play a role in meiotic resumption and pronuclear formation, mediated by a WW domain-signaling pathway during fertilization. This chain is Postacrosomal sheath WW domain-binding protein (WBP2NL), found in Macaca fascicularis (Crab-eating macaque).